The primary structure comprises 208 residues: Probable hydrolase YcaC (208 aa).

Residue C118 is part of the active site.

As to quaternary structure, homooctamer composed of two tetrameric rings.

This Escherichia coli (strain K12) protein is Probable hydrolase YcaC (ycaC).